We begin with the raw amino-acid sequence, 339 residues long: DNA-directed RNA polymerase subunit alpha (339 aa).

Positions 1-235 are alpha N-terminal domain (alpha-NTD); that stretch reads MTIQKNWQEL…DQLNVFVNFE (235 aa). Positions 251 to 339 are alpha C-terminal domain (alpha-CTD); it reads FNPAFLKKVD…ELAKRFEDHY (89 aa).

It belongs to the RNA polymerase alpha chain family. Homodimer. The RNAP catalytic core consists of 2 alpha, 1 beta, 1 beta' and 1 omega subunit. When a sigma factor is associated with the core the holoenzyme is formed, which can initiate transcription.

It carries out the reaction RNA(n) + a ribonucleoside 5'-triphosphate = RNA(n+1) + diphosphate. Its function is as follows. DNA-dependent RNA polymerase catalyzes the transcription of DNA into RNA using the four ribonucleoside triphosphates as substrates. This chain is DNA-directed RNA polymerase subunit alpha, found in Nitrobacter winogradskyi (strain ATCC 25391 / DSM 10237 / CIP 104748 / NCIMB 11846 / Nb-255).